A 262-amino-acid polypeptide reads, in one-letter code: Cytochrome c oxidase subunit 3 (262 aa).

6 consecutive transmembrane segments (helical) span residues 39 to 59 (YTMTLFILGNVITILTMYQWW), 83 to 103 (GMILFIVSEVFFFISFFWAFF), 120 to 140 (VGIAAFNPFQIPLLNTAILLA), 163 to 183 (GLFFTIVLGVYFTILQAYEYI), 201 to 221 (ATGFHGLHVLIGTTFLLICFL), and 240 to 260 (AWYWHFVDVVWLFLYITIYWW).

The protein belongs to the cytochrome c oxidase subunit 3 family. As to quaternary structure, component of the cytochrome c oxidase (complex IV, CIV), a multisubunit enzyme composed of a catalytic core of 3 subunits and several supernumerary subunits. The complex exists as a monomer or a dimer and forms supercomplexes (SCs) in the inner mitochondrial membrane with ubiquinol-cytochrome c oxidoreductase (cytochrome b-c1 complex, complex III, CIII).

It is found in the mitochondrion inner membrane. It catalyses the reaction 4 Fe(II)-[cytochrome c] + O2 + 8 H(+)(in) = 4 Fe(III)-[cytochrome c] + 2 H2O + 4 H(+)(out). Its function is as follows. Component of the cytochrome c oxidase, the last enzyme in the mitochondrial electron transport chain which drives oxidative phosphorylation. The respiratory chain contains 3 multisubunit complexes succinate dehydrogenase (complex II, CII), ubiquinol-cytochrome c oxidoreductase (cytochrome b-c1 complex, complex III, CIII) and cytochrome c oxidase (complex IV, CIV), that cooperate to transfer electrons derived from NADH and succinate to molecular oxygen, creating an electrochemical gradient over the inner membrane that drives transmembrane transport and the ATP synthase. Cytochrome c oxidase is the component of the respiratory chain that catalyzes the reduction of oxygen to water. Electrons originating from reduced cytochrome c in the intermembrane space (IMS) are transferred via the dinuclear copper A center (CU(A)) of subunit 2 and heme A of subunit 1 to the active site in subunit 1, a binuclear center (BNC) formed by heme A3 and copper B (CU(B)). The BNC reduces molecular oxygen to 2 water molecules using 4 electrons from cytochrome c in the IMS and 4 protons from the mitochondrial matrix. In Anopheles gambiae (African malaria mosquito), this protein is Cytochrome c oxidase subunit 3 (COIII).